Reading from the N-terminus, the 743-residue chain is Fork head transcription factor 1 (743 aa).

Positions 39–94 (VTMGRKASNSSDCDVHLGDTKAISRQHAKIFYSFPNQRFEISVMGKNGAFVDGEFV) constitute an FHA domain. 3 disordered regions span residues 214 to 291 (QPPK…ATQK), 411 to 450 (GISA…LQNG), and 529 to 743 (QMQG…SSYT). The span at 221 to 230 (VSPSSIQRLS) shows a compositional bias: polar residues. The fork-head DNA-binding region spans 291-385 (KPNLSYANLI…EGNFFRRTKK (95 aa)). The segment covering 434-443 (SRGENVEDRP) has biased composition (basic and acidic residues). A compositionally biased stretch (low complexity) spans 529–539 (QMQGPQQVQQQ). The span at 562-576 (NITSPSPSISVTQRP) shows a compositional bias: polar residues. Residues 614-624 (SAGPSSVRSSS) show a composition bias toward low complexity. 3 stretches are compositionally biased toward polar residues: residues 625 to 643 (YNST…QNLH), 670 to 686 (TGNQ…ASSF), and 695 to 726 (ENGS…NSSD).

It is found in the nucleus. In terms of biological role, acts as a transcriptional activator for ribosomal protein genes (RPG) that contain a HomolE UAS (upstream activating sequence) in addition to a HomolD promoter element; HomolD plays the role of a TATA box in RPG promoters that do not contain a canonical TATA sequence. Binds to HomolE elements with consensus sequence 3'-ACCCTACCCT-5' (or its inverted form AGGGTAGGGT). This chain is Fork head transcription factor 1, found in Schizosaccharomyces pombe (strain 972 / ATCC 24843) (Fission yeast).